A 948-amino-acid polypeptide reads, in one-letter code: Bifunctional glutamine synthetase adenylyltransferase/adenylyl-removing enzyme (948 aa).

Positions 1-447 are adenylyl removase; the sequence is MLTPDNKLMS…EFQQVVGAES (447 aa). Positions 453-948 are adenylyl transferase; that stretch reads EQGLQVLWQD…NCWNHLLEDD (496 aa).

This sequence belongs to the GlnE family. Mg(2+) is required as a cofactor.

The enzyme catalyses [glutamine synthetase]-O(4)-(5'-adenylyl)-L-tyrosine + phosphate = [glutamine synthetase]-L-tyrosine + ADP. It carries out the reaction [glutamine synthetase]-L-tyrosine + ATP = [glutamine synthetase]-O(4)-(5'-adenylyl)-L-tyrosine + diphosphate. Functionally, involved in the regulation of glutamine synthetase GlnA, a key enzyme in the process to assimilate ammonia. When cellular nitrogen levels are high, the C-terminal adenylyl transferase (AT) inactivates GlnA by covalent transfer of an adenylyl group from ATP to specific tyrosine residue of GlnA, thus reducing its activity. Conversely, when nitrogen levels are low, the N-terminal adenylyl removase (AR) activates GlnA by removing the adenylyl group by phosphorolysis, increasing its activity. The regulatory region of GlnE binds the signal transduction protein PII (GlnB) which indicates the nitrogen status of the cell. The polypeptide is Bifunctional glutamine synthetase adenylyltransferase/adenylyl-removing enzyme (Idiomarina loihiensis (strain ATCC BAA-735 / DSM 15497 / L2-TR)).